We begin with the raw amino-acid sequence, 148 residues long: Phospholipase A2-alpha (148 aa).

The N-terminal stretch at 1–20 (MAAPIILFSFLLFFSVSVSA) is a signal peptide. 6 cysteine pairs are disulfide-bonded: Cys38/Cys66, Cys42/Cys72, Cys47/Cys122, Cys59/Cys79, Cys78/Cys105, and Cys85/Cys98. Tyr58, Gly60, and Tyr63 together coordinate Ca(2+). His82 is an active-site residue. Asp83 is a Ca(2+) binding site.

Belongs to the phospholipase A2 family. In terms of assembly, interacts with MYB30. Ca(2+) serves as cofactor. As to expression, ubiquitous but expressed at a low level.

The protein resides in the secreted. The protein localises to the golgi apparatus. It is found in the cytoplasmic vesicle. Its subcellular location is the nucleus. The catalysed reaction is a 1,2-diacyl-sn-glycero-3-phosphocholine + H2O = a 1-acyl-sn-glycero-3-phosphocholine + a fatty acid + H(+). PA2 catalyzes the calcium-dependent hydrolysis of the 2-acyl groups in 3-sn-phosphoglycerides. Releases lysophospholipids (LPLs) and free fatty acids (FFAs) from membrane phospholipids in response to hormones and other external stimuli. Modulates the trafficking of PIN proteins to the plasma membrane. Negatively regulates MYB30 transcriptional activity and hypersensitive response control. This chain is Phospholipase A2-alpha, found in Arabidopsis thaliana (Mouse-ear cress).